Here is a 142-residue protein sequence, read N- to C-terminus: Large ribosomal subunit protein uL23 (142 aa).

Belongs to the universal ribosomal protein uL23 family.

In terms of biological role, this protein binds to a specific region on the 26S rRNA. The polypeptide is Large ribosomal subunit protein uL23 (RPL25) (Cyberlindnera jadinii (Torula yeast)).